The chain runs to 253 residues: tRNA pseudouridine synthase A (253 aa).

Asp-53 (nucleophile) is an active-site residue. Residue Tyr-112 coordinates substrate.

Belongs to the tRNA pseudouridine synthase TruA family. Homodimer.

It carries out the reaction uridine(38/39/40) in tRNA = pseudouridine(38/39/40) in tRNA. Its function is as follows. Formation of pseudouridine at positions 38, 39 and 40 in the anticodon stem and loop of transfer RNAs. This chain is tRNA pseudouridine synthase A, found in Lactococcus lactis subsp. cremoris (strain SK11).